The following is a 113-amino-acid chain: Nucleoid-associated protein sync_0026 (113 aa).

The protein belongs to the YbaB/EbfC family. Homodimer.

The protein resides in the cytoplasm. It is found in the nucleoid. In terms of biological role, binds to DNA and alters its conformation. May be involved in regulation of gene expression, nucleoid organization and DNA protection. In Synechococcus sp. (strain CC9311), this protein is Nucleoid-associated protein sync_0026.